We begin with the raw amino-acid sequence, 1013 residues long: GTPase-activating Rap/Ran-GAP domain-like protein 3 (1013 aa).

A Phosphoserine modification is found at S45. Residues 191–407 (LLVLEEQEGS…RTLDMLIRSL (217 aa)) enclose the Rap-GAP domain. Residues S426 and S432 each carry the phosphoserine modification. The CNH domain occupies 489–800 (PHEAVCADPW…QLVASRSDIY (312 aa)). Disordered regions lie at residues 810–842 (VSSGGSSKGASARNSPQTPPGRDTPVFPSSLGE) and 913–1013 (LLGL…IDLK). The span at 811–821 (SSGGSSKGASA) shows a compositional bias: low complexity. Position 827 is a phosphothreonine (T827). Positions 952 to 962 (SSSSDRIPSGS) are enriched in low complexity. 2 stretches are compositionally biased toward polar residues: residues 963–982 (LESASTSEANPEGHSASSDQ) and 993–1003 (VSGSSPFQLTA).

Belongs to the GARNL3 family.

This is GTPase-activating Rap/Ran-GAP domain-like protein 3 (GARNL3) from Homo sapiens (Human).